Here is a 396-residue protein sequence, read N- to C-terminus: Nucleolar protein 12 (396 aa).

Positions 43–104 (TDKDADGDEK…GKESKKSTKE (62 aa)) are disordered. Over residues 47–58 (ADGDEKMEDAAS) the composition is skewed to acidic residues. Residues 64–73 (KKPSKKKLAK) are compositionally biased toward basic residues. Residues 87 to 104 (EPEKLVEEGKESKKSTKE) show a composition bias toward basic and acidic residues. 2 consecutive RRM domains span residues 112–220 (RTIF…SITH) and 228–312 (RSVF…RCKN). The tract at residues 361-396 (TKDDSKPVLKKGKKERSKTGRVTKRSQAFKKSQQKK) is disordered. Basic residues predominate over residues 368-396 (VLKKGKKERSKTGRVTKRSQAFKKSQQKK).

It belongs to the RRM RBM34 family.

It is found in the nucleus. It localises to the nucleolus. In terms of biological role, involved in pre-25S rRNA processing. This Candida glabrata (strain ATCC 2001 / BCRC 20586 / JCM 3761 / NBRC 0622 / NRRL Y-65 / CBS 138) (Yeast) protein is Nucleolar protein 12 (NOP12).